The chain runs to 346 residues: Dihydroorotase (346 aa).

His-17 and His-19 together coordinate Zn(2+). Substrate-binding positions include 19–21 (HVR) and Asn-45. Zn(2+) contacts are provided by Lys-102, His-139, and His-177. The residue at position 102 (Lys-102) is an N6-carboxylysine. A substrate-binding site is contributed by His-139. Residue Leu-222 participates in substrate binding. Asp-250 is a Zn(2+) binding site. Residue Asp-250 is part of the active site. 2 residues coordinate substrate: His-254 and Ala-266.

Belongs to the metallo-dependent hydrolases superfamily. DHOase family. Class II DHOase subfamily. In terms of assembly, homodimer. Zn(2+) is required as a cofactor.

The catalysed reaction is (S)-dihydroorotate + H2O = N-carbamoyl-L-aspartate + H(+). The protein operates within pyrimidine metabolism; UMP biosynthesis via de novo pathway; (S)-dihydroorotate from bicarbonate: step 3/3. Its function is as follows. Catalyzes the reversible cyclization of carbamoyl aspartate to dihydroorotate. The polypeptide is Dihydroorotase (Delftia acidovorans (strain DSM 14801 / SPH-1)).